We begin with the raw amino-acid sequence, 466 residues long: Asparagine--tRNA ligase (466 aa).

It belongs to the class-II aminoacyl-tRNA synthetase family. In terms of assembly, homodimer.

It localises to the cytoplasm. It catalyses the reaction tRNA(Asn) + L-asparagine + ATP = L-asparaginyl-tRNA(Asn) + AMP + diphosphate + H(+). In Buchnera aphidicola subsp. Acyrthosiphon pisum (strain APS) (Acyrthosiphon pisum symbiotic bacterium), this protein is Asparagine--tRNA ligase.